Here is a 187-residue protein sequence, read N- to C-terminus: Elongation factor P (187 aa).

This sequence belongs to the elongation factor P family.

It localises to the cytoplasm. The protein operates within protein biosynthesis; polypeptide chain elongation. In terms of biological role, involved in peptide bond synthesis. Stimulates efficient translation and peptide-bond synthesis on native or reconstituted 70S ribosomes in vitro. Probably functions indirectly by altering the affinity of the ribosome for aminoacyl-tRNA, thus increasing their reactivity as acceptors for peptidyl transferase. The sequence is that of Elongation factor P from Mycolicibacterium smegmatis (strain ATCC 700084 / mc(2)155) (Mycobacterium smegmatis).